Reading from the N-terminus, the 241-residue chain is ATP synthase subunit a (241 aa).

Helical transmembrane passes span 30–50 (GQVFLTSWILLGALLVFISLG), 91–111 (FIGTLFLFVFVSNWGGALIPW), 128–148 (INTTIALALLVSLSYFYAGLS), 193–213 (LVVGVLVFLVPLILPIPVMFL), and 214–234 (GLFTSAIQALIFATLAAYYIG).

It belongs to the ATPase A chain family. As to quaternary structure, F-type ATPases have 2 components, CF(1) - the catalytic core - and CF(0) - the membrane proton channel. CF(1) has five subunits: alpha(3), beta(3), gamma(1), delta(1), epsilon(1). CF(0) has four main subunits: a, b, b' and c.

It localises to the cellular thylakoid membrane. Key component of the proton channel; it plays a direct role in the translocation of protons across the membrane. The polypeptide is ATP synthase subunit a (Prochlorococcus marinus (strain MIT 9301)).